Here is a 154-residue protein sequence, read N- to C-terminus: Transcriptional repressor NrdR (154 aa).

The segment at 3–34 (CPYCQSEDTQVKDSRPAEDGAAIRRRRACPVC) is a zinc-finger region. The region spanning 49–139 (LVVVKRTGRK…VYRNFREAKD (91 aa)) is the ATP-cone domain.

Belongs to the NrdR family. Zn(2+) is required as a cofactor.

Its function is as follows. Negatively regulates transcription of bacterial ribonucleotide reductase nrd genes and operons by binding to NrdR-boxes. In Chelativorans sp. (strain BNC1), this protein is Transcriptional repressor NrdR.